A 382-amino-acid polypeptide reads, in one-letter code: Intermediate transcription factor 3 large subunit (382 aa).

This sequence belongs to the poxviruses A23 family. In terms of assembly, heterodimer of a 45 kDa and a 32 kDa subunit.

Acts with RNA polymerase to initiate transcription from intermediate gene promoters. The chain is Intermediate transcription factor 3 large subunit (VITF3L) from Oryctolagus cuniculus (Rabbit).